The primary structure comprises 292 residues: Ribosomal RNA small subunit methyltransferase A (292 aa).

Positions 28, 30, 55, 76, 101, and 126 each coordinate S-adenosyl-L-methionine.

The protein belongs to the class I-like SAM-binding methyltransferase superfamily. rRNA adenine N(6)-methyltransferase family. RsmA subfamily.

It localises to the cytoplasm. The enzyme catalyses adenosine(1518)/adenosine(1519) in 16S rRNA + 4 S-adenosyl-L-methionine = N(6)-dimethyladenosine(1518)/N(6)-dimethyladenosine(1519) in 16S rRNA + 4 S-adenosyl-L-homocysteine + 4 H(+). Functionally, specifically dimethylates two adjacent adenosines (A1518 and A1519) in the loop of a conserved hairpin near the 3'-end of 16S rRNA in the 30S particle. May play a critical role in biogenesis of 30S subunits. This Bacillus thuringiensis (strain Al Hakam) protein is Ribosomal RNA small subunit methyltransferase A.